The following is a 315-amino-acid chain: Putative protein phosphatase 2C 24 (315 aa).

Residues 71-314 (ALRMEAASCF…DDITVVVAYI (244 aa)) enclose the PPM-type phosphatase domain. Mn(2+)-binding residues include Asp102, Gly103, Asp238, and Asp305.

Belongs to the PP2C family. The cofactor is Mg(2+). Mn(2+) is required as a cofactor.

The enzyme catalyses O-phospho-L-seryl-[protein] + H2O = L-seryl-[protein] + phosphate. The catalysed reaction is O-phospho-L-threonyl-[protein] + H2O = L-threonyl-[protein] + phosphate. In Oryza sativa subsp. japonica (Rice), this protein is Putative protein phosphatase 2C 24.